The sequence spans 149 residues: Ribosomal RNA large subunit methyltransferase H (149 aa).

Residues Leu-71, Gly-98, and 117–122 (LSKLTL) contribute to the S-adenosyl-L-methionine site.

The protein belongs to the RNA methyltransferase RlmH family. In terms of assembly, homodimer.

It is found in the cytoplasm. The enzyme catalyses pseudouridine(1915) in 23S rRNA + S-adenosyl-L-methionine = N(3)-methylpseudouridine(1915) in 23S rRNA + S-adenosyl-L-homocysteine + H(+). Its function is as follows. Specifically methylates the pseudouridine at position 1915 (m3Psi1915) in 23S rRNA. The sequence is that of Ribosomal RNA large subunit methyltransferase H from Campylobacter jejuni subsp. jejuni serotype O:6 (strain 81116 / NCTC 11828).